Consider the following 319-residue polypeptide: Malate dehydrogenase (319 aa).

Residues 10-15 (GAGNIG) and Asp-34 each bind NAD(+). 2 residues coordinate substrate: Arg-83 and Arg-89. Residues Asn-96 and 119–121 (ITN) contribute to the NAD(+) site. Asn-121 and Arg-152 together coordinate substrate. The active-site Proton acceptor is the His-176.

This sequence belongs to the LDH/MDH superfamily. MDH type 3 family.

The catalysed reaction is (S)-malate + NAD(+) = oxaloacetate + NADH + H(+). Its function is as follows. Catalyzes the reversible oxidation of malate to oxaloacetate. In Francisella tularensis subsp. mediasiatica (strain FSC147), this protein is Malate dehydrogenase.